Here is a 71-residue protein sequence, read N- to C-terminus: Small ribosomal subunit protein bS21 (71 aa).

Positions 48-59 (KAAAAVKRHAKK) are enriched in basic residues. The interval 48-71 (KAAAAVKRHAKKVQRENRKFQRLY) is disordered. Positions 60–71 (VQRENRKFQRLY) are enriched in basic and acidic residues.

Belongs to the bacterial ribosomal protein bS21 family.

This Teredinibacter turnerae (strain ATCC 39867 / T7901) protein is Small ribosomal subunit protein bS21.